The primary structure comprises 828 residues: Periplasmic nitrate reductase (828 aa).

A signal peptide (tat-type signal) is located at residues 1 to 31 (MKLSRRSFMKANAVAAVAAAAGLSVPGVARA). The region spanning 39–95 (IKWDKAPCRFCGTGCGVLVGTQQGRVVACQGDPDAPVNRGLNCIKGYFLPKIMYGKD) is the 4Fe-4S Mo/W bis-MGD-type domain. Residues cysteine 46, cysteine 49, cysteine 53, and cysteine 81 each contribute to the [4Fe-4S] cluster site. Residues lysine 83, glutamine 150, asparagine 175, cysteine 179, 212 to 219 (WGANMAEM), 243 to 247 (STYQH), 262 to 264 (QSD), methionine 372, glutamine 376, asparagine 482, 508 to 509 (SD), lysine 531, aspartate 558, and 718 to 727 (TGRVLEHWHT) contribute to the Mo-bis(molybdopterin guanine dinucleotide) site. Substrate is bound at residue phenylalanine 794. Residues asparagine 802 and lysine 819 each contribute to the Mo-bis(molybdopterin guanine dinucleotide) site.

Belongs to the prokaryotic molybdopterin-containing oxidoreductase family. NasA/NapA/NarB subfamily. Component of the periplasmic nitrate reductase NapAB complex composed of NapA and NapB. It depends on [4Fe-4S] cluster as a cofactor. Requires Mo-bis(molybdopterin guanine dinucleotide) as cofactor. Predicted to be exported by the Tat system. The position of the signal peptide cleavage has not been experimentally proven.

It localises to the periplasm. The catalysed reaction is 2 Fe(II)-[cytochrome] + nitrate + 2 H(+) = 2 Fe(III)-[cytochrome] + nitrite + H2O. Functionally, catalytic subunit of the periplasmic nitrate reductase complex NapAB. Receives electrons from NapB and catalyzes the reduction of nitrate to nitrite. In Shigella boydii serotype 4 (strain Sb227), this protein is Periplasmic nitrate reductase.